The primary structure comprises 370 residues: UDP-3-O-acylglucosamine N-acyltransferase (370 aa).

Residue His252 is the Proton acceptor of the active site. The disordered stretch occupies residues 350 to 370 (AAGRQDGPAANAASSSAGDKA). Low complexity predominate over residues 358–370 (AANAASSSAGDKA).

Belongs to the transferase hexapeptide repeat family. LpxD subfamily. Homotrimer.

The catalysed reaction is a UDP-3-O-[(3R)-3-hydroxyacyl]-alpha-D-glucosamine + a (3R)-hydroxyacyl-[ACP] = a UDP-2-N,3-O-bis[(3R)-3-hydroxyacyl]-alpha-D-glucosamine + holo-[ACP] + H(+). It functions in the pathway bacterial outer membrane biogenesis; LPS lipid A biosynthesis. Catalyzes the N-acylation of UDP-3-O-acylglucosamine using 3-hydroxyacyl-ACP as the acyl donor. Is involved in the biosynthesis of lipid A, a phosphorylated glycolipid that anchors the lipopolysaccharide to the outer membrane of the cell. The sequence is that of UDP-3-O-acylglucosamine N-acyltransferase from Paraburkholderia xenovorans (strain LB400).